Reading from the N-terminus, the 884-residue chain is Kinesin-like protein KIN-7C (884 aa).

Residues 33–355 (RIQVLVRLRP…LLFGSCAKEV (323 aa)) form the Kinesin motor domain. Position 119–126 (119–126 (GQTSSGKT)) interacts with ATP. A coiled-coil region spans residues 364-435 (VMSDKALVKH…LQDLLQSVGD (72 aa)). A disordered region spans residues 434–530 (GDHDLNRQVQ…VNSRHSRPSG (97 aa)). Residues 449-460 (RSPPSVGMPPSV) are compositionally biased toward low complexity. The span at 461–483 (SRDDSSQVSHDDSDLYKEVRCIE) shows a compositional bias: basic and acidic residues. Residues 498–523 (GESSSPQDSNMNSGLHGNDSNASVNS) show a composition bias toward polar residues.

The protein belongs to the TRAFAC class myosin-kinesin ATPase superfamily. Kinesin family. KIN-7 subfamily.

This Oryza sativa subsp. japonica (Rice) protein is Kinesin-like protein KIN-7C.